Here is a 264-residue protein sequence, read N- to C-terminus: 3-methyl-2-oxobutanoate hydroxymethyltransferase 1 (264 aa).

D45 and D84 together coordinate Mg(2+). 3-methyl-2-oxobutanoate contacts are provided by residues 45–46 (DS), D84, and K112. Position 114 (E114) interacts with Mg(2+). E181 serves as the catalytic Proton acceptor.

It belongs to the PanB family. As to quaternary structure, homodecamer; pentamer of dimers. Mg(2+) is required as a cofactor.

The protein localises to the cytoplasm. It carries out the reaction 3-methyl-2-oxobutanoate + (6R)-5,10-methylene-5,6,7,8-tetrahydrofolate + H2O = 2-dehydropantoate + (6S)-5,6,7,8-tetrahydrofolate. It functions in the pathway cofactor biosynthesis; (R)-pantothenate biosynthesis; (R)-pantoate from 3-methyl-2-oxobutanoate: step 1/2. In terms of biological role, catalyzes the reversible reaction in which hydroxymethyl group from 5,10-methylenetetrahydrofolate is transferred onto alpha-ketoisovalerate to form ketopantoate. The polypeptide is 3-methyl-2-oxobutanoate hydroxymethyltransferase 1 (Aliivibrio fischeri (strain ATCC 700601 / ES114) (Vibrio fischeri)).